The sequence spans 87 residues: Kappa-6-bungarotoxin (87 aa).

Positions Met-1–Thr-21 are cleaved as a signal peptide. Intrachain disulfides connect Cys-24/Cys-42, Cys-35/Cys-63, Cys-48/Cys-52, Cys-67/Cys-79, and Cys-80/Cys-85.

It belongs to the three-finger toxin family. Long-chain subfamily. Kappa-neurotoxin sub-subfamily. Homo- and heterodimer; non-covalently linked. Expressed by the venom gland.

It is found in the secreted. In terms of biological role, postsynaptic neurotoxin that binds and inhibits neuronal nicotinic acetylcholine receptors (nAChR) with high affinity (IC(50)&lt;100 nM). Is a selective, and slowly reversible antagonist of alpha-3/CHRNA3-containing and some alpha-4/CHRNA4-containing AChRs. The sequence is that of Kappa-6-bungarotoxin from Bungarus multicinctus (Many-banded krait).